Consider the following 207-residue polypeptide: NADH-quinone oxidoreductase subunit A (207 aa).

3 helical membrane-spanning segments follow: residues 6–26, 62–82, and 87–107; these read LSAI…LVVP, LVAI…AYAV, and AGWL…IGLV.

It belongs to the complex I subunit 3 family. NDH-1 is composed of 14 different subunits. Subunits NuoA, H, J, K, L, M, N constitute the membrane sector of the complex.

The protein resides in the cell inner membrane. The enzyme catalyses a quinone + NADH + 5 H(+)(in) = a quinol + NAD(+) + 4 H(+)(out). Functionally, NDH-1 shuttles electrons from NADH, via FMN and iron-sulfur (Fe-S) centers, to quinones in the respiratory chain. The immediate electron acceptor for the enzyme in this species is believed to be ubiquinone. Couples the redox reaction to proton translocation (for every two electrons transferred, four hydrogen ions are translocated across the cytoplasmic membrane), and thus conserves the redox energy in a proton gradient. This is NADH-quinone oxidoreductase subunit A from Psychrobacter cryohalolentis (strain ATCC BAA-1226 / DSM 17306 / VKM B-2378 / K5).